Reading from the N-terminus, the 344-residue chain is Heat-inducible transcription repressor HrcA (344 aa).

It belongs to the HrcA family.

Its function is as follows. Negative regulator of class I heat shock genes (grpE-dnaK-dnaJ and groELS operons). Prevents heat-shock induction of these operons. In Streptococcus pneumoniae (strain ATCC 700669 / Spain 23F-1), this protein is Heat-inducible transcription repressor HrcA.